Reading from the N-terminus, the 72-residue chain is MRLVVCLVFLASFALVCQGEAYRGGYTGPIPRPPPIGRPPFRPVCNACYRLSVSDARNCCIKFGSCCHLVKG.

Positions 1-21 are cleaved as a signal peptide; that stretch reads MRLVVCLVFLASFALVCQGEA. Disulfide bonds link Cys45-Cys59, Cys48-Cys66, and Cys60-Cys67. Lys71 carries the post-translational modification Lysine amide.

Higher expression in hemocytes and to a lesser extent in heart, testis, gills, intestine, lymphoid organ and hepatopancreas. Traces in eyes and subcuticular epithelium. Not present in the brain.

It localises to the cytoplasmic granule. Functionally, antibacterial activity against M.luteus and E.coli bacteria. Antifungal activity against N.crassa and F.oxysporum. Presents chitin-binding activity. The sequence is that of Penaeidin-2a from Penaeus vannamei (Whiteleg shrimp).